The primary structure comprises 284 residues: MNNNHSYDDRSFHIPLHPSNTSNPNPNLQFALSSSYDHSPKKKRTKTVASSSSSSPKSASKPKYTKKPDPNAPKITRPCTECGRKFWSWKALFGHMRCHPERQWRGINPPPNYRVPTAASSKQLNQILPNWVSFMSEEDHEVASCLLMLSNGTPSSSSIERFECGGCKKVFGSHQALGGHRASHKNVKGCFAITNVTDDPMTVSTSSGHDHQGKILTFSGHHKCNICFRVFSSGQALGGHMRCHWEKEEEPMISGALDLNVPPTIQDLSTSDTSGCCLDLRLGL.

Residues 1–12 show a composition bias toward basic and acidic residues; sequence MNNNHSYDDRSF. A disordered region spans residues 1 to 76; the sequence is MNNNHSYDDR…KPDPNAPKIT (76 aa). Over residues 18–37 the composition is skewed to polar residues; the sequence is PSNTSNPNPNLQFALSSSYD. The span at 47-62 shows a compositional bias: low complexity; that stretch reads TVASSSSSSPKSASKP. 3 consecutive C2H2-type zinc fingers follow at residues 77–99, 162–184, and 222–244; these read RPCTECGRKFWSWKALFGHMRCH, FECGGCKKVFGSHQALGGHRASH, and HKCNICFRVFSSGQALGGHMRCH.

Interacts (via the EAR motif) with TPL. In terms of tissue distribution, expressed exclusively in pollen.

Its subcellular location is the nucleus. Mediates the regulation of male germ cell division by DUO1. The sequence is that of Zinc finger protein ZAT3 from Arabidopsis thaliana (Mouse-ear cress).